Here is a 35-residue protein sequence, read N- to C-terminus: Probable L,D-transpeptidase ErfK/SrfK (35 aa).

Residues 1–21 (MRRVKLLCTALMLLASHGALA) form the signal peptide.

The protein belongs to the YkuD family.

It localises to the periplasm. It functions in the pathway cell wall biogenesis; peptidoglycan biosynthesis. The polypeptide is Probable L,D-transpeptidase ErfK/SrfK (erfK) (Klebsiella aerogenes (Enterobacter aerogenes)).